We begin with the raw amino-acid sequence, 226 residues long: MVKSFFVTGTDTDVGKTLVARTLLLEFAAHGLRCAGYKPISAGCARTPDGLRNLDAVLLQEAASLPLPYDLVNPYAYEPPIAPHIAASEARDAITLKGLSDGLRQIEQAGAELVVVEGAGGWFLPLDRKHLLSDWVKQENMPVIMVVGAKLGCLNHALLTFAAIRNNNLPVAGWVINRLHGSMSHYQENLDTLRGLLPAPFLGEIPFVNNPLEADLRGRLDISPLL.

An ATP-binding site is contributed by 13–18; it reads DVGKTL. Residue Thr-17 coordinates Mg(2+). The active site involves Lys-38. ATP contacts are provided by residues Asp-55, 117 to 120, 177 to 178, 206 to 208, and Glu-213; these read EGAG, NR, and PFV. Positions 55 and 117 each coordinate Mg(2+).

Belongs to the dethiobiotin synthetase family. As to quaternary structure, homodimer. The cofactor is Mg(2+).

It localises to the cytoplasm. It catalyses the reaction (7R,8S)-7,8-diammoniononanoate + CO2 + ATP = (4R,5S)-dethiobiotin + ADP + phosphate + 3 H(+). It participates in cofactor biosynthesis; biotin biosynthesis; biotin from 7,8-diaminononanoate: step 1/2. In terms of biological role, catalyzes a mechanistically unusual reaction, the ATP-dependent insertion of CO2 between the N7 and N8 nitrogen atoms of 7,8-diaminopelargonic acid (DAPA, also called 7,8-diammoniononanoate) to form a ureido ring. The sequence is that of ATP-dependent dethiobiotin synthetase BioD from Aeromonas hydrophila subsp. hydrophila (strain ATCC 7966 / DSM 30187 / BCRC 13018 / CCUG 14551 / JCM 1027 / KCTC 2358 / NCIMB 9240 / NCTC 8049).